Here is a 304-residue protein sequence, read N- to C-terminus: UDP-3-O-acyl-N-acetylglucosamine deacetylase (304 aa).

H78, H237, and D241 together coordinate Zn(2+). Residue H264 is the Proton donor of the active site.

Belongs to the LpxC family. Zn(2+) serves as cofactor.

The enzyme catalyses a UDP-3-O-[(3R)-3-hydroxyacyl]-N-acetyl-alpha-D-glucosamine + H2O = a UDP-3-O-[(3R)-3-hydroxyacyl]-alpha-D-glucosamine + acetate. The protein operates within glycolipid biosynthesis; lipid IV(A) biosynthesis; lipid IV(A) from (3R)-3-hydroxytetradecanoyl-[acyl-carrier-protein] and UDP-N-acetyl-alpha-D-glucosamine: step 2/6. Its function is as follows. Catalyzes the hydrolysis of UDP-3-O-myristoyl-N-acetylglucosamine to form UDP-3-O-myristoylglucosamine and acetate, the committed step in lipid A biosynthesis. This chain is UDP-3-O-acyl-N-acetylglucosamine deacetylase, found in Legionella pneumophila (strain Paris).